We begin with the raw amino-acid sequence, 616 residues long: Vitamin B12 transporter BtuB (616 aa).

The signal sequence occupies residues 1 to 20; the sequence is MIKKISLLTALSVTAFSGWA. The short motif at 26–33 is the TonB box element; that stretch reads DSLVVTAN. The region spanning 38-152 is the TBDR plug domain; the sequence is PVNTVLAPTS…IGGVVNIITT (115 aa). Residues L83, S85, N92, and 110-111 contribute to the cyanocob(III)alamin site; that span reads VT. A TBDR beta-barrel domain is found at 155-616; that stretch reads KDGTTLNAGI…EYTLSGSYTF (462 aa). A run of 3 beta stranded transmembrane segments spans residues 158 to 165, 169 to 178, and 184 to 195; these read TTLNAGIG, YQNYGGSTQQ, and TRVTLAGDYTYT. Positions 199, 211, 213, and 215 each coordinate Ca(2+). The next 2 membrane-spanning stretches (beta stranded) occupy residues 217 to 227 and 232 to 248; these read FMNKTLYGALE and DQWTGFVRGYGYSNRTA. Positions 249, 250, and 263 each coordinate Ca(2+). 17 beta stranded membrane-spanning segments follow: residues 265–279, 281–298, 311–327, 330–339, 355–371, 373–383, 387–402, 405–419, 436–445, 451–460, 475–492, 496–511, 519–531, 537–552, 560–574, 587–598, and 604–616; these read RQLYSQTWDAGLRFN, DLFHSQLLSSYSHSKDYN, TLDEIKQYNVQWTNAVD, HGNIGAGVDW, YDLRNTGVYLTALQKFG, VTLEGAVRSDD, FGRHGTWQSSAAWEFI, YRFIASYGTAYKAPN, ESKQWEGAFE, VNWRVSAYRN, YYNVGKARIKGVEATASF, PLTHTLGYDYVDARNA, RRAKQQVKYQLDT, DWSLTYHYLGTRYDTD, NVKLGGVSLWDVAVS, IANLFDKDYETA, and AGREYTLSGSYTF. T311 contributes to the cyanocob(III)alamin binding site. R519 serves as a coordination point for cyanocob(III)alamin. The TonB C-terminal box motif lies at 599-616; that stretch reads YGYATAGREYTLSGSYTF.

Belongs to the TonB-dependent receptor family. BtuB (TC 1.B.14.3.1) subfamily.

The protein localises to the cell outer membrane. Functionally, involved in the active translocation of vitamin B12 (cyanocobalamin) across the outer membrane to the periplasmic space. It derives its energy for transport by interacting with the trans-periplasmic membrane protein TonB. This chain is Vitamin B12 transporter BtuB, found in Cronobacter sakazakii (strain ATCC BAA-894) (Enterobacter sakazakii).